Reading from the N-terminus, the 403-residue chain is Phosphoglycerate kinase (403 aa).

Substrate-binding positions include 22–24 (DFN), arginine 37, 60–63 (HFGR), arginine 119, and arginine 152. Residues lysine 202, glutamate 324, and 354 to 357 (GGDT) each bind ATP.

Belongs to the phosphoglycerate kinase family. Monomer.

The protein localises to the cytoplasm. The enzyme catalyses (2R)-3-phosphoglycerate + ATP = (2R)-3-phospho-glyceroyl phosphate + ADP. Its pathway is carbohydrate degradation; glycolysis; pyruvate from D-glyceraldehyde 3-phosphate: step 2/5. The chain is Phosphoglycerate kinase from Maricaulis maris (strain MCS10) (Caulobacter maris).